The chain runs to 452 residues: Bifunctional protein GlmU (452 aa).

The pyrophosphorylase stretch occupies residues 1–233 (MTDRPFAALI…AWEVAGVNSR (233 aa)). UDP-N-acetyl-alpha-D-glucosamine-binding positions include 11-14 (LAAG), Lys-25, Gln-76, 81-82 (GT), 104-106 (YGD), Gly-144, Glu-159, Asn-174, and Asn-231. Asp-106 lines the Mg(2+) pocket. Asn-231 provides a ligand contact to Mg(2+). The segment at 234 to 254 (AELAAVEAEWQRRRRLAAMAD) is linker. Residues 255–452 (GATLIAPETV…AMKIKKAARK (198 aa)) form an N-acetyltransferase region. Residues Arg-320 and Lys-338 each coordinate UDP-N-acetyl-alpha-D-glucosamine. The active-site Proton acceptor is the His-350. Tyr-353 and Asn-364 together coordinate UDP-N-acetyl-alpha-D-glucosamine. Residues Ala-367, 373–374 (NY), Ser-392, Ala-410, and Arg-427 contribute to the acetyl-CoA site.

In the N-terminal section; belongs to the N-acetylglucosamine-1-phosphate uridyltransferase family. The protein in the C-terminal section; belongs to the transferase hexapeptide repeat family. In terms of assembly, homotrimer. The cofactor is Mg(2+).

It is found in the cytoplasm. The catalysed reaction is alpha-D-glucosamine 1-phosphate + acetyl-CoA = N-acetyl-alpha-D-glucosamine 1-phosphate + CoA + H(+). It carries out the reaction N-acetyl-alpha-D-glucosamine 1-phosphate + UTP + H(+) = UDP-N-acetyl-alpha-D-glucosamine + diphosphate. It functions in the pathway nucleotide-sugar biosynthesis; UDP-N-acetyl-alpha-D-glucosamine biosynthesis; N-acetyl-alpha-D-glucosamine 1-phosphate from alpha-D-glucosamine 6-phosphate (route II): step 2/2. It participates in nucleotide-sugar biosynthesis; UDP-N-acetyl-alpha-D-glucosamine biosynthesis; UDP-N-acetyl-alpha-D-glucosamine from N-acetyl-alpha-D-glucosamine 1-phosphate: step 1/1. The protein operates within bacterial outer membrane biogenesis; LPS lipid A biosynthesis. In terms of biological role, catalyzes the last two sequential reactions in the de novo biosynthetic pathway for UDP-N-acetylglucosamine (UDP-GlcNAc). The C-terminal domain catalyzes the transfer of acetyl group from acetyl coenzyme A to glucosamine-1-phosphate (GlcN-1-P) to produce N-acetylglucosamine-1-phosphate (GlcNAc-1-P), which is converted into UDP-GlcNAc by the transfer of uridine 5-monophosphate (from uridine 5-triphosphate), a reaction catalyzed by the N-terminal domain. This Rhizorhabdus wittichii (strain DSM 6014 / CCUG 31198 / JCM 15750 / NBRC 105917 / EY 4224 / RW1) (Sphingomonas wittichii) protein is Bifunctional protein GlmU.